The following is a 234-amino-acid chain: Probable ascorbate-specific transmembrane electron transporter 1 (234 aa).

At 1-9 the chain is on the cytoplasmic side; sequence MGLGVRAAP. The helical transmembrane segment at 10-30 threads the bilayer; it reads FTYVAHALAVAAATMVLVWCI. Residues 13-217 enclose the Cytochrome b561 domain; it reads VAHALAVAAA…FGASVVVAAV (205 aa). The Extracellular segment spans residues 31–48; it reads HFRGGLAFEATNKNLIFN. Residues 49-69 traverse the membrane as a helical segment; that stretch reads VHPVLMLIGYIILGSEAIMVY. Histidine 50 contributes to the heme b binding site. L-ascorbate is bound at residue 65–73; that stretch reads AIMVYKVLP. Topologically, residues 70-82 are cytoplasmic; that stretch reads KVLPTWKHDTTKL. The chain crosses the membrane as a helical span at residues 83-103; that stretch reads IHLILHAIALVFGAVGIYCAF. Heme b is bound by residues histidine 84 and histidine 118. The Extracellular segment spans residues 104 to 121; the sequence is KFHNESGIANLYSLHSWL. Position 114 to 123 (114 to 123) interacts with monodehydro-L-ascorbate radical; the sequence is LYSLHSWLGI. A helical transmembrane segment spans residues 122 to 142; it reads GIGTICLYGIQWIFGFVAFFF. At 143–151 the chain is on the cytoplasmic side; the sequence is PRASPSVRK. The chain crosses the membrane as a helical span at residues 152 to 172; sequence GVLPWHILFGLFVYILALATA. Residue histidine 157 coordinates heme b. Residues 173-194 are Extracellular-facing; it reads ELGFLEKLTFLQSSGLDKYGAE. Residues 195-215 traverse the membrane as a helical segment; it reads AFLVNFTALIVVLFGASVVVA. The Cytoplasmic segment spans residues 216 to 234; that stretch reads AVSPARVEEPHEYAPIPES.

Heme b is required as a cofactor.

The protein resides in the membrane. Two-heme-containing cytochrome. Catalyzes ascorbate-dependent trans-membrane electron transfer by utilizing a concerted H(+)/e(-) transfer mechanism. This chain is Probable ascorbate-specific transmembrane electron transporter 1, found in Oryza sativa subsp. japonica (Rice).